The following is a 359-amino-acid chain: DNA polymerase IV (359 aa).

The region spanning 4 to 185 (IIHIDMDCYF…LSLRKIPGVG (182 aa)) is the UmuC domain. Asp-8 and Asp-103 together coordinate Mg(2+). Residue Glu-104 is part of the active site.

The protein belongs to the DNA polymerase type-Y family. In terms of assembly, monomer. The cofactor is Mg(2+).

Its subcellular location is the cytoplasm. It carries out the reaction DNA(n) + a 2'-deoxyribonucleoside 5'-triphosphate = DNA(n+1) + diphosphate. Poorly processive, error-prone DNA polymerase involved in untargeted mutagenesis. Copies undamaged DNA at stalled replication forks, which arise in vivo from mismatched or misaligned primer ends. These misaligned primers can be extended by PolIV. Exhibits no 3'-5' exonuclease (proofreading) activity. May be involved in translesional synthesis, in conjunction with the beta clamp from PolIII. This Shewanella sp. (strain ANA-3) protein is DNA polymerase IV.